Here is a 649-residue protein sequence, read N- to C-terminus: Cysteine-rich receptor-like protein kinase 2 (649 aa).

Residues 1–29 (MKKEPVHILPLYLPCLLMFLLSSLRQITG) form the signal peptide. Residues 30-258 (DARARAVKVT…IPRNGRSRGS (229 aa)) lie on the Extracellular side of the membrane. Gnk2-homologous domains follow at residues 33–134 (ARAV…NYSF) and 139–245 (KGPE…DQDF). 5 N-linked (GlcNAc...) asparagine glycosylation sites follow: N47, N131, N149, N154, and N214. The helical transmembrane segment at 259–279 (VVVIVVSVLSSVVVFMIGVAV) threads the bilayer. Residues 280–649 (SVYICKRRTI…TVSQSSFYGR (370 aa)) are Cytoplasmic-facing. The Protein kinase domain maps to 325–608 (FDNANKLGQG…HMLKNKEEVL (284 aa)). ATP-binding positions include 331-339 (LGQGGFGTV) and K353. Position 398 is a phosphotyrosine (Y398). D450 serves as the catalytic Proton acceptor. Phosphoserine occurs at positions 454 and 483. Phosphothreonine occurs at positions 484 and 489. Position 497 is a phosphotyrosine (Y497).

Belongs to the protein kinase superfamily. Ser/Thr protein kinase family. CRK subfamily.

It localises to the membrane. It carries out the reaction L-seryl-[protein] + ATP = O-phospho-L-seryl-[protein] + ADP + H(+). It catalyses the reaction L-threonyl-[protein] + ATP = O-phospho-L-threonyl-[protein] + ADP + H(+). The polypeptide is Cysteine-rich receptor-like protein kinase 2 (CRK2) (Arabidopsis thaliana (Mouse-ear cress)).